A 355-amino-acid chain; its full sequence is Ubiquinone biosynthesis protein COQ4 homolog, mitochondrial (355 aa).

Positions 134, 135, 138, and 150 each coordinate Zn(2+).

The protein belongs to the COQ4 family. In terms of assembly, component of a multi-subunit COQ enzyme complex. Requires Zn(2+) as cofactor.

It is found in the mitochondrion inner membrane. It carries out the reaction a 4-hydroxy-3-methoxy-5-(all-trans-polyprenyl)benzoate + H(+) = a 2-methoxy-6-(all-trans-polyprenyl)phenol + CO2. Its pathway is cofactor biosynthesis; ubiquinone biosynthesis. Its function is as follows. Lyase that catalyzes the C1-decarboxylation of 4-hydroxy-3-methoxy-5-(all-trans-polyprenyl)benzoic acid into 2-methoxy-6-(all-trans-polyprenyl)phenol during ubiquinone biosynthesis. In Plasmodium vivax (strain Salvador I), this protein is Ubiquinone biosynthesis protein COQ4 homolog, mitochondrial.